We begin with the raw amino-acid sequence, 65 residues long: Beta-defensin 41 (65 aa).

The first 19 residues, 1 to 19, serve as a signal peptide directing secretion; that stretch reads MKFHLFFFILLFGATILTA. Cystine bridges form between Cys35–Cys63, Cys42–Cys56, and Cys46–Cys64.

Belongs to the beta-defensin family. As to expression, isoform 2 is epididymis-specific and expressed mainly in the proximal caput.

The protein resides in the secreted. Its function is as follows. Has bactericidal activity. In terms of biological role, isoform 2 may play a role in the antimicrobial protection of sperm and urogenital tract epithelia. In Mus musculus (Mouse), this protein is Beta-defensin 41.